The sequence spans 500 residues: NAD(P)H-quinone oxidoreductase chain 4, chloroplastic (500 aa).

A run of 14 helical transmembrane segments spans residues 4–24 (FPWLTIIVVLPIFAGSLIFFL), 31–51 (VIFWYTICISILELLLTTYAF), 84–104 (GLSIGPILLTGFITTLATLAA), 111–131 (ARLFHFLMLVMYSGQIGLFSC), 134–154 (LLLFFLMWEFELIPVYLLLSM), 167–187 (FILYTAGGSVFLLMGALGIGL), 212–232 (IFYIGFFIAFAVKLPIIPLHT), 242–262 (HYSTCMLLAGILLKMGAYGLV), 272–292 (AHSLFSPWLMIVGAMQIIYAA), 308–328 (SSVSHMGFLIIGIGSITDIGL), 330–350 (GALLQIISHGFIGAALFFLAG), 386–406 (LALPGMSGFVTEFIVFFGLIT), 411–431 (LLMAKILIPFVMAIGIILTPI), and 462–482 (LFLSISIFLPILGIGLYPDFV).

The protein belongs to the complex I subunit 4 family.

It is found in the plastid. The protein resides in the chloroplast thylakoid membrane. It catalyses the reaction a plastoquinone + NADH + (n+1) H(+)(in) = a plastoquinol + NAD(+) + n H(+)(out). It carries out the reaction a plastoquinone + NADPH + (n+1) H(+)(in) = a plastoquinol + NADP(+) + n H(+)(out). The protein is NAD(P)H-quinone oxidoreductase chain 4, chloroplastic of Jasminum nudiflorum (Winter jasmine).